Reading from the N-terminus, the 411-residue chain is MSDVSSKEIYEVKKTLKELEDKKGRGTELVSVYIPPEKQISDVAKQMRDELGQSANIKSKQTRKNVQSAIEVIIQRLKLFPKPPEKGLVMFVGMIPKGGPGTEKMETYVFQPPEAVQTYTYHCDSQFFVEPLKQIIEYKEVYGVVVLDRKESTIATLRGKRIDIIKHLTSGVPGKHKAGGQSQRRFDRVIELAAHEFLKRIGRHVDEAFLPLKDELKGVLIGGPGHTKNDFVDGEYIHYEIHDKIINIVDTSYTGDFGIREVIDESADTLDEMDIMQEKKFMRKFLTGLISESGLSTYGEKEVRQNLQMGAVETLLISENLKSKRQTYTCPACNTVDVITTRQHQEPPEKRCPKCNEVMKITKTQETAEELIELAEEVKTHVEVISIETEEGTQLDKAFGGIAGILRYKVK.

The protein belongs to the eukaryotic release factor 1 family. Heterodimer of two subunits, one of which binds GTP.

Its subcellular location is the cytoplasm. Its function is as follows. Directs the termination of nascent peptide synthesis (translation) in response to the termination codons UAA, UAG and UGA. This is Peptide chain release factor subunit 1 from Methanosphaera stadtmanae (strain ATCC 43021 / DSM 3091 / JCM 11832 / MCB-3).